The chain runs to 556 residues: Urease subunit alpha 1 (556 aa).

The Urease domain occupies 127–556; that stretch reads GAVDTHVHLL…SVSLNRLYFL (430 aa). The Ni(2+) site is built by H132, H134, and K212. The residue at position 212 (K212) is an N6-carboxylysine. H214 contributes to the substrate binding site. Ni(2+) is bound by residues H241 and H267. The active-site Proton donor is H315. Position 355 (D355) interacts with Ni(2+).

It belongs to the metallo-dependent hydrolases superfamily. Urease alpha subunit family. May form a heterohexamer of 3 UreC (alpha) and 3 UreAB (gamma/beta) subunits. May also form a heterotrimer of UreA (gamma), UreB (beta) and UreC (alpha) subunits. Three heterotrimers associate to form the active enzyme. The cofactor is Ni cation. Post-translationally, carboxylation allows a single lysine to coordinate two nickel ions.

The protein localises to the cytoplasm. It carries out the reaction urea + 2 H2O + H(+) = hydrogencarbonate + 2 NH4(+). Its pathway is nitrogen metabolism; urea degradation; CO(2) and NH(3) from urea (urease route): step 1/1. This chain is Urease subunit alpha 1, found in Streptomyces avermitilis (strain ATCC 31267 / DSM 46492 / JCM 5070 / NBRC 14893 / NCIMB 12804 / NRRL 8165 / MA-4680).